Here is a 527-residue protein sequence, read N- to C-terminus: Probable glucomannan 4-beta-mannosyltransferase 9 (527 aa).

A helical membrane pass occupies residues 37 to 59 (AMSVMLFVEKVYMSVVLVGVHLF). Residue aspartate 131 is part of the active site. Substrate is bound by residues aspartate 190 and aspartate 192. Residue aspartate 284 is part of the active site. 4 helical membrane passes run 363-383 (IIGH…TVLI), 399-419 (IVTI…IFWV), 478-498 (ALEL…IAYG), and 505-525 (FLFL…GTIV).

This sequence belongs to the glycosyltransferase 2 family. Plant cellulose synthase-like A subfamily.

It localises to the golgi apparatus membrane. The enzyme catalyses GDP-mannose + (glucomannan)n = GDP + (glucomannan)n+1.. In terms of biological role, probable mannan synthase which consists of a 4-beta-mannosyltransferase activity on mannan using GDP-mannose. The beta-1,4-mannan product is the backbone for galactomannan synthesis by galactomannan galactosyltransferase. Galactomannan is a noncellulosic polysaccharides of plant cell wall. The protein is Probable glucomannan 4-beta-mannosyltransferase 9 of Oryza sativa subsp. japonica (Rice).